We begin with the raw amino-acid sequence, 83 residues long: Small ribosomal subunit protein bS18 (83 aa).

This sequence belongs to the bacterial ribosomal protein bS18 family. Part of the 30S ribosomal subunit. Forms a tight heterodimer with protein bS6.

Its function is as follows. Binds as a heterodimer with protein bS6 to the central domain of the 16S rRNA, where it helps stabilize the platform of the 30S subunit. In Cytophaga hutchinsonii (strain ATCC 33406 / DSM 1761 / CIP 103989 / NBRC 15051 / NCIMB 9469 / D465), this protein is Small ribosomal subunit protein bS18.